We begin with the raw amino-acid sequence, 480 residues long: RuvB-like helicase 2 (480 aa).

An ATP-binding site is contributed by 76-83 (GPPSTGKT).

It belongs to the RuvB family. In terms of assembly, may form heterododecamers with RVB1. Component of the SWR1 chromatin remodeling complex, the INO80 chromatin remodeling complex, and of the R2TP complex.

Its subcellular location is the nucleus. It carries out the reaction ATP + H2O = ADP + phosphate + H(+). Its function is as follows. DNA helicase which participates in several chromatin remodeling complexes, including the SWR1 and the INO80 complexes. The SWR1 complex mediates the ATP-dependent exchange of histone H2A for the H2A variant HZT1 leading to transcriptional regulation of selected genes by chromatin remodeling. The INO80 complex remodels chromatin by shifting nucleosomes and is involved in DNA repair. Also involved in pre-rRNA processing. The polypeptide is RuvB-like helicase 2 (RVB2) (Debaryomyces hansenii (strain ATCC 36239 / CBS 767 / BCRC 21394 / JCM 1990 / NBRC 0083 / IGC 2968) (Yeast)).